Consider the following 133-residue polypeptide: Phosphomevalonate dehydratase small subunit (133 aa).

The active-site Proton acceptor is serine 62.

The protein belongs to the AcnX type II small subunit family. In terms of assembly, heterodimer composed of a large subunit (PMDh-L) and a small subunit (PMDh-S).

The catalysed reaction is (R)-5-phosphomevalonate = (2E)-3-methyl-5-phosphooxypent-2-enoate + H2O. Its pathway is isoprenoid biosynthesis; isopentenyl diphosphate biosynthesis via mevalonate pathway. In terms of biological role, component of a hydro-lyase that catalyzes the dehydration of mevalonate 5-phosphate (MVA5P) to form trans-anhydromevalonate 5-phosphate (tAHMP). Involved in the archaeal mevalonate (MVA) pathway, which provides fundamental precursors for isoprenoid biosynthesis, such as isopentenyl diphosphate (IPP) and dimethylallyl diphosphate (DMAPP). In Thermococcus kodakarensis (strain ATCC BAA-918 / JCM 12380 / KOD1) (Pyrococcus kodakaraensis (strain KOD1)), this protein is Phosphomevalonate dehydratase small subunit.